A 216-amino-acid polypeptide reads, in one-letter code: Somatotropin (216 aa).

Residues 1–25 (MAPGSWFSPLLIAVVTLGLPQGAAA) form the signal peptide. His45 lines the Zn(2+) pocket. A disulfide bridge connects residues Cys78 and Cys189. Glu198 is a Zn(2+) binding site. A disulfide bridge connects residues Cys206 and Cys214.

The protein belongs to the somatotropin/prolactin family. As to expression, pituitary gland.

It is found in the secreted. Functionally, growth hormone plays an important role in growth control. In Meleagris gallopavo (Wild turkey), this protein is Somatotropin (GH).